Here is a 334-residue protein sequence, read N- to C-terminus: GTPase Obg (334 aa).

Positions 1–159 (MRFVDEVVIK…KEVRLELNLL (159 aa)) constitute an Obg domain. The 172-residue stretch at 160 to 331 (ADVALLGLPN…LAKKLNEFLQ (172 aa)) folds into the OBG-type G domain. Residues 166 to 173 (GLPNAGKS), 191 to 195 (FTTMY), 212 to 215 (DIPG), 282 to 285 (NKID), and 312 to 314 (SAA) contribute to the GTP site. Residues serine 173 and threonine 193 each coordinate Mg(2+).

The protein belongs to the TRAFAC class OBG-HflX-like GTPase superfamily. OBG GTPase family. As to quaternary structure, monomer. Requires Mg(2+) as cofactor.

Its subcellular location is the cytoplasm. Functionally, an essential GTPase which binds GTP, GDP and possibly (p)ppGpp with moderate affinity, with high nucleotide exchange rates and a fairly low GTP hydrolysis rate. Plays a role in control of the cell cycle, stress response, ribosome biogenesis and in those bacteria that undergo differentiation, in morphogenesis control. This chain is GTPase Obg, found in Francisella tularensis subsp. holarctica (strain FTNF002-00 / FTA).